The sequence spans 329 residues: Serpentine receptor class alpha-2 (329 aa).

A run of 7 helical transmembrane segments spans residues Phe25–Leu45, Ile57–Ala77, Tyr104–Ile124, Cys144–Trp164, His188–Leu208, Phe240–Val260, and Leu273–Val293.

It belongs to the nematode receptor-like protein sra family.

The protein localises to the membrane. The polypeptide is Serpentine receptor class alpha-2 (sra-2) (Caenorhabditis elegans).